Consider the following 672-residue polypeptide: Fumonisin cluster-specific transcription factor FUM21 (672 aa).

A DNA-binding region (zn(2)-C6 fungal-type) is located at residues 30-56 (CESCKRRKVRCNGTNPCNQCQKSSIEC). 2 disordered regions span residues 65-111 (ANDG…RFDG) and 190-212 (KSSG…GFNT). A compositionally biased stretch (polar residues) spans 77-93 (SPVQHTRGSLTPPQTSP).

Its subcellular location is the nucleus. In terms of biological role, transcription factor that regulates the expression of the gene cluster that mediates the biosynthesis of fumonisins B1 (FB1), B2 (FB2), B3 (FB3), and B4 (FB4), which are carcinogenic mycotoxins. This chain is Fumonisin cluster-specific transcription factor FUM21 (FUM21), found in Gibberella moniliformis (strain M3125 / FGSC 7600) (Maize ear and stalk rot fungus).